We begin with the raw amino-acid sequence, 268 residues long: E3 ubiquitin-protein ligase IAP-3 (268 aa).

BIR repeat units follow at residues 18–84 (KAAR…CPFV) and 111–178 (EAAR…CEYV). Residues cysteine 148, cysteine 151, histidine 168, and cysteine 175 each contribute to the Zn(2+) site. Residues 221 to 256 (CKICLGAEKTVCFVPCGHVVACGKCAAGVTTCPVCR) form an RING-type zinc finger.

It belongs to the IAP family. Post-translationally, auto-ubiquitinated.

It catalyses the reaction S-ubiquitinyl-[E2 ubiquitin-conjugating enzyme]-L-cysteine + [acceptor protein]-L-lysine = [E2 ubiquitin-conjugating enzyme]-L-cysteine + N(6)-ubiquitinyl-[acceptor protein]-L-lysine.. Its function is as follows. RING-finger E3 ubiquitin ligase required to prevent cellular apoptosis in infected cells. Ubiquitinates and subsequently targets host pro-apoptotic cellular proteins such as HID for degradation by the proteasome. This chain is E3 ubiquitin-protein ligase IAP-3 (IAP3), found in Orgyia pseudotsugata multicapsid polyhedrosis virus (OpMNPV).